A 601-amino-acid chain; its full sequence is NADH-quinone oxidoreductase subunit C/D (601 aa).

Residues 1 to 191 form an NADH dehydrogenase I subunit C region; it reads MKLTRDFPSN…DPFMLDAAKQ (191 aa). Positions 215–601 are NADH dehydrogenase I subunit D; the sequence is DYMFLNLGPN…IDFVMSDVDR (387 aa).

This sequence in the N-terminal section; belongs to the complex I 30 kDa subunit family. The protein in the C-terminal section; belongs to the complex I 49 kDa subunit family. As to quaternary structure, NDH-1 is composed of 13 different subunits. Subunits NuoB, CD, E, F, and G constitute the peripheral sector of the complex.

It localises to the cell inner membrane. It catalyses the reaction a quinone + NADH + 5 H(+)(in) = a quinol + NAD(+) + 4 H(+)(out). In terms of biological role, NDH-1 shuttles electrons from NADH, via FMN and iron-sulfur (Fe-S) centers, to quinones in the respiratory chain. The immediate electron acceptor for the enzyme in this species is believed to be ubiquinone. Couples the redox reaction to proton translocation (for every two electrons transferred, four hydrogen ions are translocated across the cytoplasmic membrane), and thus conserves the redox energy in a proton gradient. In Aeromonas salmonicida (strain A449), this protein is NADH-quinone oxidoreductase subunit C/D.